A 314-amino-acid polypeptide reads, in one-letter code: Malate dehydrogenase (314 aa).

9–15 (IGVGNVG) serves as a coordination point for NAD(+). Arg-84 and Arg-90 together coordinate substrate. NAD(+) is bound by residues Asn-97 and 120–122 (ISN). Positions 122 and 153 each coordinate substrate. His-177 functions as the Proton acceptor in the catalytic mechanism.

Belongs to the LDH/MDH superfamily.

The catalysed reaction is (S)-malate + NAD(+) = oxaloacetate + NADH + H(+). Its function is as follows. Catalyzes the reversible oxidation of malate to oxaloacetate. The polypeptide is Malate dehydrogenase (Aliarcobacter butzleri (strain RM4018) (Arcobacter butzleri)).